Here is a 393-residue protein sequence, read N- to C-terminus: tRNA(Met) cytidine acetate ligase (393 aa).

Positions 81, 142, and 167 each coordinate ATP.

The protein belongs to the TmcAL family.

It localises to the cytoplasm. It catalyses the reaction cytidine(34) in elongator tRNA(Met) + acetate + ATP = N(4)-acetylcytidine(34) in elongator tRNA(Met) + AMP + diphosphate. Catalyzes the formation of N(4)-acetylcytidine (ac(4)C) at the wobble position of elongator tRNA(Met), using acetate and ATP as substrates. First activates an acetate ion to form acetyladenylate (Ac-AMP) and then transfers the acetyl group to tRNA to form ac(4)C34. The protein is tRNA(Met) cytidine acetate ligase of Bacillus cereus (strain 03BB102).